The sequence spans 492 residues: uncharacterized protein (492 aa).

The protein belongs to the FGGY kinase family.

This is an uncharacterized protein from Archaeoglobus fulgidus (strain ATCC 49558 / DSM 4304 / JCM 9628 / NBRC 100126 / VC-16).